A 254-amino-acid polypeptide reads, in one-letter code: 5'-nucleotidase SurE (254 aa).

A divalent metal cation-binding residues include D8, D9, S40, and N93.

This sequence belongs to the SurE nucleotidase family. A divalent metal cation serves as cofactor.

The protein localises to the cytoplasm. The catalysed reaction is a ribonucleoside 5'-phosphate + H2O = a ribonucleoside + phosphate. Its function is as follows. Nucleotidase that shows phosphatase activity on nucleoside 5'-monophosphates. The sequence is that of 5'-nucleotidase SurE from Actinobacillus pleuropneumoniae serotype 5b (strain L20).